Reading from the N-terminus, the 93-residue chain is Early nodulin-36B (93 aa).

This is Early nodulin-36B from Glycine max (Soybean).